The primary structure comprises 1422 residues: FH1/FH2 domain-containing protein 3 (1422 aa).

The GBD/FH3 domain occupies 18-411; the sequence is NSTNFPEPSR…NFGNNSYHSS (394 aa). Disordered regions lie at residues 323 to 464, 521 to 666, 687 to 708, 754 to 781, 821 to 849, 1262 to 1305, 1320 to 1357, and 1374 to 1410; these read RHED…RRRQ, ACLA…GVNG, RKSP…QEAE, SGDL…VQPK, LGHR…PPLL, QQKQ…SYAE, SSPS…SPNV, and TQVP…EEAR. Serine 345 is modified (phosphoserine). The span at 357–366 shows a compositional bias: basic residues; sequence LDRRRSRRHS. Residues 367 to 390 show a composition bias toward polar residues; it reads VQSIKSTLSAPTSPCSQSAPSFKP. Serine 375 carries the phosphoserine modification. Over residues 410–430 the composition is skewed to low complexity; sequence SSRPSSGSSVPTTPTSSVSPP. Residues 438-449 show a composition bias toward polar residues; that stretch reads SSPSGLLTSSFR. Positions 448–480 form a coiled coil; that stretch reads FRQHQESLAAERERRRQEREERLQRIEREERNK. The segment covering 450–464 has biased composition (basic and acidic residues); sequence QHQESLAAERERRRQ. The span at 521–535 shows a compositional bias: low complexity; that stretch reads ACLAPLSHSPSSSDS. Positions 536 to 547 are enriched in polar residues; that stretch reads QEALTVSASSPG. Acidic residues-rich tracts occupy residues 559–569 and 592–603; these read PEPESEAEPEA and ETEVEQALEQEP. The segment covering 604–624 has biased composition (basic and acidic residues); the sequence is EERASLSEKERQNEGVNERDN. The span at 626-635 shows a compositional bias: low complexity; the sequence is SASSVSSSSS. Basic and acidic residues predominate over residues 637-651; that stretch reads LEREEKEDKLSRDRT. A Phosphoserine modification is found at serine 763. Threonine 775 carries the phosphothreonine modification. A compositionally biased stretch (pro residues) spans 827–849; it reads PGPPPPPPPTFLGLPPPPPPPLL. The FH1 domain occupies 827–858; it reads PGPPPPPPPTFLGLPPPPPPPLLDSIPPPPVP. Positions 883–1279 constitute an FH2 domain; the sequence is GQPTFTKKKK…HRERNKTRGK (397 aa). Residues 1264–1278 show a composition bias toward basic residues; that stretch reads KQKRANHRERNKTRG. The region spanning 1359-1391 is the DAD domain; that stretch reads DDAADEIMDRIVKSATQVPSQRVVPRERKRSRA. Residues 1385 to 1400 show a composition bias toward basic residues; that stretch reads ERKRSRANRKSLRRTL.

The protein belongs to the formin homology family. In terms of assembly, interacts with nestin/NES-based interfilament (IF). Interacts with SQSTM1; isoform 4 threonine phosphorylation disrupts SQSTM1-binding. Phosphorylated on Thr-1474 and Thr-1476 by CK2. As to expression, expressed in the heart, kidney and brain. May be down-regulated in various types of heart diseases, including idiopathic dilated, ventricular dilated, familial dilated and perinatal dilated cardiomyopathies, as well as ischemic heart disease (at protein level).

Its subcellular location is the cytoplasm. It is found in the cytoskeleton. The protein resides in the myofibril. It localises to the sarcomere. The protein localises to the z line. In terms of biological role, actin-organizing protein that may cause stress fiber formation together with cell elongation. Isoform 4 may play a role in actin filament polymerization in cardiomyocytes. The protein is FH1/FH2 domain-containing protein 3 (FHOD3) of Homo sapiens (Human).